Consider the following 166-residue polypeptide: Specificity protein transcription factor 2 (166 aa).

The tract at residues 17–45 (SYHHSLPSISPPDSPASTSASSSSSSIGA) is disordered. The segment covering 31–42 (PASTSASSSSSS) has biased composition (low complexity). 3 consecutive C2H2-type zinc fingers follow at residues 77–101 (HLCSVPGCGKTYKKTSHLRAHLRKH), 107–131 (FVCDWFDCGKRFDRSDQLIRHKRTH), and 137–160 (FACKFCIRQFSRSDHLQQHLTSVH).

Belongs to the Sp1 C2H2-type zinc-finger protein family.

In terms of biological role, transcription factor. Probably acts downstream of the Wnt signaling pathway. The sequence is that of Specificity protein transcription factor 2 from Caenorhabditis elegans.